Reading from the N-terminus, the 444-residue chain is 3-phosphoshikimate 1-carboxyvinyltransferase (444 aa).

The 3-phosphoshikimate site is built by Lys-29, Ser-30, and Arg-34. Lys-29 is a phosphoenolpyruvate binding site. Residues Gly-103 and Arg-132 each contribute to the phosphoenolpyruvate site. The 3-phosphoshikimate site is built by Ser-177, Gln-179, Asp-329, and Lys-356. Gln-179 serves as a coordination point for phosphoenolpyruvate. Residue Asp-329 is the Proton acceptor of the active site. Residues Arg-360 and Arg-402 each contribute to the phosphoenolpyruvate site.

This sequence belongs to the EPSP synthase family. In terms of assembly, monomer.

It localises to the cytoplasm. The enzyme catalyses 3-phosphoshikimate + phosphoenolpyruvate = 5-O-(1-carboxyvinyl)-3-phosphoshikimate + phosphate. It participates in metabolic intermediate biosynthesis; chorismate biosynthesis; chorismate from D-erythrose 4-phosphate and phosphoenolpyruvate: step 6/7. Its function is as follows. Catalyzes the transfer of the enolpyruvyl moiety of phosphoenolpyruvate (PEP) to the 5-hydroxyl of shikimate-3-phosphate (S3P) to produce enolpyruvyl shikimate-3-phosphate and inorganic phosphate. The protein is 3-phosphoshikimate 1-carboxyvinyltransferase of Prochlorococcus marinus (strain NATL2A).